The chain runs to 513 residues: GMP synthase [glutamine-hydrolyzing] (513 aa).

One can recognise a Glutamine amidotransferase type-1 domain in the interval 9-198; the sequence is LILVLDFGSQ…VRRVCDCIGE (190 aa). C86 functions as the Nucleophile in the catalytic mechanism. Catalysis depends on residues H172 and E174. The 190-residue stretch at 199–388 folds into the GMPS ATP-PPase domain; it reads WSMENFIEIE…LGIPEHLVWR (190 aa). 226–232 lines the ATP pocket; the sequence is SGGVDSS.

Homodimer.

The enzyme catalyses XMP + L-glutamine + ATP + H2O = GMP + L-glutamate + AMP + diphosphate + 2 H(+). Its pathway is purine metabolism; GMP biosynthesis; GMP from XMP (L-Gln route): step 1/1. Its function is as follows. Catalyzes the synthesis of GMP from XMP. The polypeptide is GMP synthase [glutamine-hydrolyzing] (Staphylococcus saprophyticus subsp. saprophyticus (strain ATCC 15305 / DSM 20229 / NCIMB 8711 / NCTC 7292 / S-41)).